A 271-amino-acid polypeptide reads, in one-letter code: uncharacterized protein (271 aa).

The interval 1–20 (MPDLHTLPAGSRPERAIRNN) is disordered.

It belongs to the PEP2 family.

This is an uncharacterized protein from Aspergillus terreus (strain NIH 2624 / FGSC A1156).